The chain runs to 681 residues: DNA-directed RNA polymerase subunit beta' (681 aa).

C69, C71, C87, and C90 together coordinate Zn(2+). The Mg(2+) site is built by D489, D491, and D493.

It belongs to the RNA polymerase beta' chain family. RpoC1 subfamily. As to quaternary structure, in plastids the minimal PEP RNA polymerase catalytic core is composed of four subunits: alpha, beta, beta', and beta''. When a (nuclear-encoded) sigma factor is associated with the core the holoenzyme is formed, which can initiate transcription. Mg(2+) serves as cofactor. It depends on Zn(2+) as a cofactor.

It localises to the plastid. Its subcellular location is the chloroplast. It catalyses the reaction RNA(n) + a ribonucleoside 5'-triphosphate = RNA(n+1) + diphosphate. Its function is as follows. DNA-dependent RNA polymerase catalyzes the transcription of DNA into RNA using the four ribonucleoside triphosphates as substrates. The protein is DNA-directed RNA polymerase subunit beta' of Solanum bulbocastanum (Wild potato).